Consider the following 916-residue polypeptide: MLTNIAKKIFGSRNDRLLKQYRKSVARINALEEQMQALSDADLQAKTAEFKQRLADGQTLDGILPEAFAVCREASRRTLGMRHFDVQLIGGMVLHDGKIAEMRTGEGKTLVATLAVYLNALAGKGVHVVTVNDYLASRDAGIMEPLYNFLGLTVGVIISDMQPFDRQNAYAADITYGTNNEFGFDYLRDNMVTDQYDKVQRELNFAVVDEVDSILIDEARTPLIISGQADDNIQLYQIMNTVPPHLVRQETEEGEGDYWVDEKAHQVILSEAGHEHAEQILTQMGLLAENDSLYSAANIALMHHLMAALRAHSLFHKDQHYVIQDGEIVIVDEFTGRLMSGRRWSEGLHQAVEAKEGVEIKRENQTLASITFQNYFRLYTKLSGMTGTADTEAFEFQSIYNLETVIIPTNRPVQRKDFNDQIFRSAEEKFEAVVKDIEECHKRGQPVLVGTTSIENSELVSHLLQKAGLPHNVLNAKEHEREALIVAQAGKVGAITVATNMAGRGTDIVLGGNLKHQTDAIRADETLSDEEKQAQIAALENGWQAEHDKVMEAGGLHIIGTERHESRRIDNQLRGRSGRQGDPGSSRFYLSFEDPLLRLFALDRAAAILNRLAPERGVAIEHNLLTRQIEGAQRKVEGRNFDMRKQVLEYDDVANEQRKVIYSQRNEILTSKDISDLMQEIRSDVVSDLVDTYMPPDSMEEQWDIPTLENRLAAEFRLHEDIQSWLKADNAIDGQDIKERLIERIENEYAAKTELVGKQAMADFERNVMLQVIDNQWREHLAAMDYLRQGIHLRSYAQKNPKQEYKREAFTMFQDLWNGIKFHIASLLTSVQIEQNPVAVVEEQPIGNIQSIHSESPDMEELLGQSQTDLVTEAFNPDGTDFSPEALEARGQIVHRNDPCPCGSGLKYKQCHGKLA.

ATP-binding positions include Gln87, 105-109 (GEGKT), and Asp507. 4 residues coordinate Zn(2+): Cys900, Cys902, Cys911, and His912.

It belongs to the SecA family. Monomer and homodimer. Part of the essential Sec protein translocation apparatus which comprises SecA, SecYEG and auxiliary proteins SecDF-YajC and YidC. Zn(2+) is required as a cofactor.

The protein resides in the cell inner membrane. The protein localises to the cytoplasm. It carries out the reaction ATP + H2O + cellular proteinSide 1 = ADP + phosphate + cellular proteinSide 2.. Part of the Sec protein translocase complex. Interacts with the SecYEG preprotein conducting channel. Has a central role in coupling the hydrolysis of ATP to the transfer of proteins into and across the cell membrane, serving both as a receptor for the preprotein-SecB complex and as an ATP-driven molecular motor driving the stepwise translocation of polypeptide chains across the membrane. This is Protein translocase subunit SecA from Neisseria meningitidis serogroup C (strain 053442).